We begin with the raw amino-acid sequence, 884 residues long: Formin-like protein 9 (884 aa).

The signal sequence occupies residues 1 to 19; sequence MGMAMRCVLVLFSVSPVLL. Residues 140 to 160 form a helical membrane-spanning segment; sequence IVALGVVGLCLVVLGVVIAAF. Disordered regions lie at residues 179 to 204, 295 to 318, and 403 to 473; these read FHHG…PDPL, THDS…LSPK, and TMTN…PLPR. Over residues 300 to 310 the composition is skewed to low complexity; that stretch reads SDSSYQSLSPD. The span at 429–443 shows a compositional bias: pro residues; that stretch reads KPAPPPPPQKNPPPN. Positions 464–884 constitute an FH2 domain; that stretch reads VGKDGSPLPR…QTLNLVLPLK (421 aa).

The protein belongs to the formin-like family. Class-I subfamily.

It localises to the membrane. The polypeptide is Formin-like protein 9 (FH9) (Oryza sativa subsp. indica (Rice)).